The sequence spans 496 residues: Angiopoietin-2 (496 aa).

The signal sequence occupies residues 1 to 18 (MWQLVFLTLSCDLAVATA). Asn90, Asn120, Asn134, Asn152, Asn241, and Asn304 each carry an N-linked (GlcNAc...) asparagine glycan. Positions 167 to 249 (STNKLEKQIL…VNNSVLQKQQ (83 aa)) form a coiled coil. Residues 275-495 (KDEQIIFRDC…ATTMMIRPAD (221 aa)) enclose the Fibrinogen C-terminal domain. Cys284 and Cys313 are oxidised to a cystine. Ca(2+) contacts are provided by Asp429, Asp431, Cys433, and Cys435. Cystine bridges form between Cys433/Cys435 and Cys437/Cys450.

As to quaternary structure, interacts with TEK/TIE2, competing for the same binding site as ANGPT1. Interacts with ITGA5. Interacts with SVEP1/polydom. Interacts with THBD; this interaction significantly inhibits the generation of activated PC and TAFIa/CPB2 by the thrombin/thrombomodulin complex.

The protein localises to the secreted. Binds to TEK/TIE2, competing for the ANGPT1 binding site, and modulating ANGPT1 signaling. Can induce tyrosine phosphorylation of TEK/TIE2 in the absence of ANGPT1. In the absence of angiogenic inducers, such as VEGF, ANGPT2-mediated loosening of cell-matrix contacts may induce endothelial cell apoptosis with consequent vascular regression. In concert with VEGF, it may facilitate endothelial cell migration and proliferation, thus serving as a permissive angiogenic signal. Involved in the regulation of lymphangiogenesis. The sequence is that of Angiopoietin-2 (ANGPT2) from Bos taurus (Bovine).